Reading from the N-terminus, the 379-residue chain is Chaperone protein DnaJ (379 aa).

Residues D6–G71 enclose the J domain. The CR-type zinc finger occupies G138–T220. The Zn(2+) site is built by C151, C154, C168, C171, C194, C197, C208, and C211. 4 CXXCXGXG motif repeats span residues C151–G158, C168–G175, C194–G201, and C208–G215.

Belongs to the DnaJ family. Homodimer. Requires Zn(2+) as cofactor.

The protein resides in the cytoplasm. In terms of biological role, participates actively in the response to hyperosmotic and heat shock by preventing the aggregation of stress-denatured proteins and by disaggregating proteins, also in an autonomous, DnaK-independent fashion. Unfolded proteins bind initially to DnaJ; upon interaction with the DnaJ-bound protein, DnaK hydrolyzes its bound ATP, resulting in the formation of a stable complex. GrpE releases ADP from DnaK; ATP binding to DnaK triggers the release of the substrate protein, thus completing the reaction cycle. Several rounds of ATP-dependent interactions between DnaJ, DnaK and GrpE are required for fully efficient folding. Also involved, together with DnaK and GrpE, in the DNA replication of plasmids through activation of initiation proteins. This is Chaperone protein DnaJ from Ruminiclostridium cellulolyticum (strain ATCC 35319 / DSM 5812 / JCM 6584 / H10) (Clostridium cellulolyticum).